Here is a 188-residue protein sequence, read N- to C-terminus: UPF0314 protein Sala_3154 (188 aa).

3 helical membrane passes run 8–28 (TGWL…IFMG), 57–77 (WYSF…RWIM), and 143–163 (MRWW…LWTI).

The protein belongs to the UPF0314 family.

The protein resides in the cell membrane. This is UPF0314 protein Sala_3154 from Sphingopyxis alaskensis (strain DSM 13593 / LMG 18877 / RB2256) (Sphingomonas alaskensis).